Here is a 131-residue protein sequence, read N- to C-terminus: Holo-[acyl-carrier-protein] synthase (131 aa).

Mg(2+)-binding residues include Asp8 and Glu59.

Belongs to the P-Pant transferase superfamily. AcpS family. Requires Mg(2+) as cofactor.

The protein resides in the cytoplasm. It catalyses the reaction apo-[ACP] + CoA = holo-[ACP] + adenosine 3',5'-bisphosphate + H(+). Functionally, transfers the 4'-phosphopantetheine moiety from coenzyme A to a Ser of acyl-carrier-protein. This chain is Holo-[acyl-carrier-protein] synthase, found in Rickettsia felis (strain ATCC VR-1525 / URRWXCal2) (Rickettsia azadi).